A 489-amino-acid chain; its full sequence is uncharacterized protein (489 aa).

Residue Thr26 is modified to Phosphothreonine. A Phosphoserine modification is found at Ser27. 3 helical membrane passes run 63–83, 182–202, and 221–241; these read IVYL…IEFA, LVWS…ILCA, and VFKL…IAFL. Disordered stretches follow at residues 260–312, 401–435, and 450–489; these read PKTS…APLE, STLL…VPPS, and PSIN…PVVH. Ser263 is modified (phosphoserine). A compositionally biased stretch (polar residues) spans 268-282; it reads QRGTSSSQPSENDAN. Over residues 450–465 the composition is skewed to polar residues; it reads PSINNVGGSTAPSVNN. Low complexity predominate over residues 477–489; it reads SRSSTLTERPVVH.

The protein localises to the endoplasmic reticulum membrane. This is an uncharacterized protein from Schizosaccharomyces pombe (strain 972 / ATCC 24843) (Fission yeast).